Here is a 120-residue protein sequence, read N- to C-terminus: Large ribosomal subunit protein uL18 (120 aa).

The protein belongs to the universal ribosomal protein uL18 family. As to quaternary structure, part of the 50S ribosomal subunit; part of the 5S rRNA/L5/L18/L25 subcomplex. Contacts the 5S and 23S rRNAs.

Its function is as follows. This is one of the proteins that bind and probably mediate the attachment of the 5S RNA into the large ribosomal subunit, where it forms part of the central protuberance. The chain is Large ribosomal subunit protein uL18 from Azorhizobium caulinodans (strain ATCC 43989 / DSM 5975 / JCM 20966 / LMG 6465 / NBRC 14845 / NCIMB 13405 / ORS 571).